Consider the following 161-residue polypeptide: Large ribosomal subunit protein bL17 (161 aa).

Residues Lys-126–Glu-161 are disordered. Residues Lys-129–Lys-138 show a composition bias toward basic residues. Low complexity predominate over residues Glu-142–Thr-152.

The protein belongs to the bacterial ribosomal protein bL17 family. Part of the 50S ribosomal subunit. Contacts protein L32.

This Bacteroides fragilis (strain ATCC 25285 / DSM 2151 / CCUG 4856 / JCM 11019 / LMG 10263 / NCTC 9343 / Onslow / VPI 2553 / EN-2) protein is Large ribosomal subunit protein bL17.